The sequence spans 444 residues: Tol-Pal system protein TolB (444 aa).

A signal peptide spans 1–31; the sequence is MSFDLNRRQLMISAATAAGALALGPARDAFG.

Belongs to the TolB family. In terms of assembly, the Tol-Pal system is composed of five core proteins: the inner membrane proteins TolA, TolQ and TolR, the periplasmic protein TolB and the outer membrane protein Pal. They form a network linking the inner and outer membranes and the peptidoglycan layer.

The protein resides in the periplasm. Functionally, part of the Tol-Pal system, which plays a role in outer membrane invagination during cell division and is important for maintaining outer membrane integrity. This Rhodopseudomonas palustris (strain ATCC BAA-98 / CGA009) protein is Tol-Pal system protein TolB.